Reading from the N-terminus, the 252-residue chain is Oil body-associated protein 2A (252 aa).

The disordered stretch occupies residues 1–31; that stretch reads MASSDGKPLPTPASVGGGGGSSTAPPGQPTT. A compositionally biased stretch (low complexity) spans 22 to 31; sequence STAPPGQPTT.

It belongs to the OBAP family.

The chain is Oil body-associated protein 2A from Zea mays (Maize).